Reading from the N-terminus, the 317-residue chain is Melanocyte-stimulating hormone receptor (317 aa).

At methionine 1–glutamate 37 the chain is on the extracellular side. Residue asparagine 29 is glycosylated (N-linked (GlcNAc...) asparagine). The helical transmembrane segment at valine 38–isoleucine 63 threads the bilayer. Topologically, residues alanine 64–proline 72 are cytoplasmic. A helical transmembrane segment spans residues methionine 73–leucine 93. Over glutamate 94–asparagine 118 the chain is Extracellular. The helical transmembrane segment at valine 119–valine 140 threads the bilayer. Residues aspartate 141–arginine 163 lie on the Cytoplasmic side of the membrane. A helical membrane pass occupies residues isoleucine 164–tyrosine 183. At asparagine 184–cysteine 191 the chain is on the extracellular side. A helical transmembrane segment spans residues leucine 192–leucine 211. Residues alanine 212–alanine 240 lie on the Cytoplasmic side of the membrane. Residues alanine 241–leucine 266 form a helical membrane-spanning segment. At cysteine 267–asparagine 279 the chain is on the extracellular side. Residues phenylalanine 280–phenylalanine 300 traverse the membrane as a helical segment. Residues arginine 301 to tryptophan 317 lie on the Cytoplasmic side of the membrane. The S-palmitoyl cysteine moiety is linked to residue cysteine 315.

The protein belongs to the G-protein coupled receptor 1 family. In terms of assembly, interacts with MGRN1, but does not undergo MGRN1-mediated ubiquitination; this interaction competes with GNAS-binding and thus inhibits agonist-induced cAMP production. Interacts with OPN3; the interaction results in a decrease in MC1R-mediated cAMP signaling and ultimately a decrease in melanin production in melanocytes.

The protein localises to the cell membrane. In terms of biological role, receptor for MSH (alpha, beta and gamma) and ACTH. The activity of this receptor is mediated by G proteins which activate adenylate cyclase. Mediates melanogenesis, the production of eumelanin (black/brown) and phaeomelanin (red/yellow), via regulation of cAMP signaling in melanocytes. This Rangifer tarandus (Reindeer) protein is Melanocyte-stimulating hormone receptor (MC1R).